The sequence spans 362 residues: Phospho-N-acetylmuramoyl-pentapeptide-transferase (362 aa).

A run of 10 helical transmembrane segments spans residues 18 to 38 (VFGY…AISL), 73 to 93 (TMGG…WGDL), 97 to 117 (YVWV…VDDW), 134 to 154 (YFWT…SATT), 160 to 180 (LIVP…FIAL), 200 to 220 (GLAI…AYVA), 237 to 257 (AGEL…FLWF), 264 to 284 (VFMG…IAVV), 289 to 309 (IVLF…MVQV), and 339 to 359 (QVVV…LSTL).

It belongs to the glycosyltransferase 4 family. MraY subfamily. Requires Mg(2+) as cofactor.

It is found in the cell inner membrane. The catalysed reaction is UDP-N-acetyl-alpha-D-muramoyl-L-alanyl-gamma-D-glutamyl-meso-2,6-diaminopimeloyl-D-alanyl-D-alanine + di-trans,octa-cis-undecaprenyl phosphate = di-trans,octa-cis-undecaprenyl diphospho-N-acetyl-alpha-D-muramoyl-L-alanyl-D-glutamyl-meso-2,6-diaminopimeloyl-D-alanyl-D-alanine + UMP. The protein operates within cell wall biogenesis; peptidoglycan biosynthesis. Functionally, catalyzes the initial step of the lipid cycle reactions in the biosynthesis of the cell wall peptidoglycan: transfers peptidoglycan precursor phospho-MurNAc-pentapeptide from UDP-MurNAc-pentapeptide onto the lipid carrier undecaprenyl phosphate, yielding undecaprenyl-pyrophosphoryl-MurNAc-pentapeptide, known as lipid I. The chain is Phospho-N-acetylmuramoyl-pentapeptide-transferase from Azoarcus sp. (strain BH72).